Reading from the N-terminus, the 143-residue chain is Nucleoside diphosphate kinase (143 aa).

Residues lysine 11, phenylalanine 59, arginine 87, threonine 93, arginine 104, and asparagine 114 each contribute to the ATP site. The active-site Pros-phosphohistidine intermediate is the histidine 117.

Belongs to the NDK family. As to quaternary structure, homotetramer. Mg(2+) serves as cofactor.

The protein localises to the cytoplasm. It catalyses the reaction a 2'-deoxyribonucleoside 5'-diphosphate + ATP = a 2'-deoxyribonucleoside 5'-triphosphate + ADP. It carries out the reaction a ribonucleoside 5'-diphosphate + ATP = a ribonucleoside 5'-triphosphate + ADP. Functionally, major role in the synthesis of nucleoside triphosphates other than ATP. The ATP gamma phosphate is transferred to the NDP beta phosphate via a ping-pong mechanism, using a phosphorylated active-site intermediate. This chain is Nucleoside diphosphate kinase, found in Psychrobacter cryohalolentis (strain ATCC BAA-1226 / DSM 17306 / VKM B-2378 / K5).